A 202-amino-acid polypeptide reads, in one-letter code: Ribonuclease HII (202 aa).

The RNase H type-2 domain occupies 18-202 (TYICGVDEAG…FAPVAKLLKQ (185 aa)). A divalent metal cation contacts are provided by D24, E25, and D116.

It belongs to the RNase HII family. Mn(2+) is required as a cofactor. It depends on Mg(2+) as a cofactor.

The protein localises to the cytoplasm. It catalyses the reaction Endonucleolytic cleavage to 5'-phosphomonoester.. Endonuclease that specifically degrades the RNA of RNA-DNA hybrids. This Acholeplasma laidlawii (strain PG-8A) protein is Ribonuclease HII.